Consider the following 996-residue polypeptide: Alanine--tRNA ligase, chloroplastic/mitochondrial (996 aa).

Zn(2+)-binding residues include His677, His681, Cys779, and His783.

Belongs to the class-II aminoacyl-tRNA synthetase family. Monomer. Zn(2+) is required as a cofactor.

Its subcellular location is the plastid. It localises to the chloroplast. It is found in the mitochondrion. The enzyme catalyses tRNA(Ala) + L-alanine + ATP = L-alanyl-tRNA(Ala) + AMP + diphosphate. Its function is as follows. Catalyzes the attachment of alanine to tRNA(Ala) in a two-step reaction: alanine is first activated by ATP to form Ala-AMP and then transferred to the acceptor end of tRNA(Ala). Also edits incorrectly charged tRNA(Ala) via its editing domain. In Oryza sativa subsp. japonica (Rice), this protein is Alanine--tRNA ligase, chloroplastic/mitochondrial.